Here is a 141-residue protein sequence, read N- to C-terminus: Large ribosomal subunit protein uL11 (141 aa).

Belongs to the universal ribosomal protein uL11 family. In terms of assembly, part of the ribosomal stalk of the 50S ribosomal subunit. Interacts with L10 and the large rRNA to form the base of the stalk. L10 forms an elongated spine to which L12 dimers bind in a sequential fashion forming a multimeric L10(L12)X complex. Post-translationally, one or more lysine residues are methylated.

Functionally, forms part of the ribosomal stalk which helps the ribosome interact with GTP-bound translation factors. This is Large ribosomal subunit protein uL11 from Wolinella succinogenes (strain ATCC 29543 / DSM 1740 / CCUG 13145 / JCM 31913 / LMG 7466 / NCTC 11488 / FDC 602W) (Vibrio succinogenes).